Consider the following 128-residue polypeptide: Sulfurtransferase TusD (128 aa).

The active-site Cysteine persulfide intermediate is the Cys-78.

It belongs to the DsrE/TusD family. In terms of assembly, heterohexamer, formed by a dimer of trimers. The hexameric TusBCD complex contains 2 copies each of TusB, TusC and TusD. The TusBCD complex interacts with TusE.

The protein resides in the cytoplasm. Its function is as follows. Part of a sulfur-relay system required for 2-thiolation of 5-methylaminomethyl-2-thiouridine (mnm(5)s(2)U) at tRNA wobble positions. Accepts sulfur from TusA and transfers it in turn to TusE. The chain is Sulfurtransferase TusD from Salmonella arizonae (strain ATCC BAA-731 / CDC346-86 / RSK2980).